A 173-amino-acid chain; its full sequence is Streptothricin acetyltransferase A (173 aa).

The N-acetyltransferase domain maps to valine 21–phenylalanine 173.

Belongs to the acetyltransferase family. GNAT subfamily. In terms of assembly, homodimer.

The enzyme catalyses streptothricin D + acetyl-CoA = N(beta)-acetylstreptothricin D + CoA + H(+). It catalyses the reaction streptothricin F + acetyl-CoA = N(beta)-acetylstreptothricin F + CoA + H(+). Its function is as follows. Involved in resistance to streptothricin, a broad-spectrum antibiotic produced by streptomycetes. Detoxifies streptothricin via acetylation of the beta amino group of the first beta-lysyl moiety of streptothricin. The protein is Streptothricin acetyltransferase A of Bacillus subtilis (strain 168).